Here is an 809-residue protein sequence, read N- to C-terminus: Glycerol-3-phosphate acyltransferase (809 aa).

An HXXXXD motif motif is present at residues 309–314 (HRSHMD).

This sequence belongs to the GPAT/DAPAT family.

The protein localises to the cell inner membrane. It carries out the reaction sn-glycerol 3-phosphate + an acyl-CoA = a 1-acyl-sn-glycero-3-phosphate + CoA. It participates in phospholipid metabolism; CDP-diacylglycerol biosynthesis; CDP-diacylglycerol from sn-glycerol 3-phosphate: step 1/3. In Shewanella oneidensis (strain ATCC 700550 / JCM 31522 / CIP 106686 / LMG 19005 / NCIMB 14063 / MR-1), this protein is Glycerol-3-phosphate acyltransferase.